Reading from the N-terminus, the 89-residue chain is MSLNAEQTATILAEFGRSEGDTGSTEVQVALLTAQINHLQGHFKEHKHDHHSRRGLLRMVNTRRKLLAYLKRTENVRYQELIKKLGLRR.

The protein belongs to the universal ribosomal protein uS15 family. Part of the 30S ribosomal subunit. Forms a bridge to the 50S subunit in the 70S ribosome, contacting the 23S rRNA.

One of the primary rRNA binding proteins, it binds directly to 16S rRNA where it helps nucleate assembly of the platform of the 30S subunit by binding and bridging several RNA helices of the 16S rRNA. In terms of biological role, forms an intersubunit bridge (bridge B4) with the 23S rRNA of the 50S subunit in the ribosome. This chain is Small ribosomal subunit protein uS15, found in Shewanella sediminis (strain HAW-EB3).